A 303-amino-acid chain; its full sequence is Elongation factor Ts (303 aa).

The interval 80 to 83 is involved in Mg(2+) ion dislocation from EF-Tu; the sequence is TDFV.

This sequence belongs to the EF-Ts family.

The protein resides in the cytoplasm. In terms of biological role, associates with the EF-Tu.GDP complex and induces the exchange of GDP to GTP. It remains bound to the aminoacyl-tRNA.EF-Tu.GTP complex up to the GTP hydrolysis stage on the ribosome. This is Elongation factor Ts from Clostridium botulinum (strain Eklund 17B / Type B).